A 209-amino-acid chain; its full sequence is Ribonuclease HII (209 aa).

The 192-residue stretch at 7-198 folds into the RNase H type-2 domain; it reads GPVAGVDEAG…VAKAHQEWLH (192 aa). The a divalent metal cation site is built by Asp13, Glu14, and Asp107.

This sequence belongs to the RNase HII family. The cofactor is Mn(2+). It depends on Mg(2+) as a cofactor.

The protein resides in the cytoplasm. It catalyses the reaction Endonucleolytic cleavage to 5'-phosphomonoester.. Functionally, endonuclease that specifically degrades the RNA of RNA-DNA hybrids. The chain is Ribonuclease HII from Corynebacterium glutamicum (strain R).